The chain runs to 306 residues: Recombination-associated protein RdgC (306 aa).

This sequence belongs to the RdgC family.

The protein localises to the cytoplasm. It localises to the nucleoid. Functionally, may be involved in recombination. This chain is Recombination-associated protein RdgC, found in Pseudomonas putida (strain ATCC 47054 / DSM 6125 / CFBP 8728 / NCIMB 11950 / KT2440).